The following is a 211-amino-acid chain: Uracil phosphoribosyltransferase (211 aa).

5-phospho-alpha-D-ribose 1-diphosphate is bound by residues arginine 78, arginine 103, and 130-138 (DPMLATGGT). Uracil is bound by residues isoleucine 196 and 201–203 (GDA). Aspartate 202 is a 5-phospho-alpha-D-ribose 1-diphosphate binding site.

It belongs to the UPRTase family. It depends on Mg(2+) as a cofactor.

The catalysed reaction is UMP + diphosphate = 5-phospho-alpha-D-ribose 1-diphosphate + uracil. It participates in pyrimidine metabolism; UMP biosynthesis via salvage pathway; UMP from uracil: step 1/1. With respect to regulation, allosterically activated by GTP. In terms of biological role, catalyzes the conversion of uracil and 5-phospho-alpha-D-ribose 1-diphosphate (PRPP) to UMP and diphosphate. The chain is Uracil phosphoribosyltransferase from Beutenbergia cavernae (strain ATCC BAA-8 / DSM 12333 / CCUG 43141 / JCM 11478 / NBRC 16432 / NCIMB 13614 / HKI 0122).